We begin with the raw amino-acid sequence, 109 residues long: Probable WRKY transcription factor 43 (109 aa).

Positions S24–E89 form a DNA-binding region, WRKY.

The protein belongs to the WRKY group II-c family.

The protein resides in the nucleus. Functionally, transcription factor. Interacts specifically with the W box (5'-(T)TGAC[CT]-3'), a frequently occurring elicitor-responsive cis-acting element. In Arabidopsis thaliana (Mouse-ear cress), this protein is Probable WRKY transcription factor 43 (WRKY43).